Consider the following 360-residue polypeptide: Photosystem II protein D1 (360 aa).

The next 3 helical transmembrane spans lie at 29 to 46, 118 to 133, and 142 to 156; these read YIGW…TATS, HFLL…EWEL, and WIFV…AASA. Residue His118 coordinates chlorophyll a. Tyr126 serves as a coordination point for pheophytin a. 2 residues coordinate [CaMn4O5] cluster: Asp170 and Glu189. A helical membrane pass occupies residues 197-218; that stretch reads FHMAGVAGVFGGSLFSAMHGSL. His198 serves as a coordination point for chlorophyll a. Residues His215 and 264–265 contribute to the a quinone site; that span reads SF. Position 215 (His215) interacts with Fe cation. His272 is a Fe cation binding site. The chain crosses the membrane as a helical span at residues 274–288; the sequence is FLAAWPVVGIWLTAM. [CaMn4O5] cluster is bound by residues His332, Glu333, Asp342, and Ala344. Positions 345–360 are excised as a propeptide; that stretch reads SGDVLPVALNAPAVNG.

The protein belongs to the reaction center PufL/M/PsbA/D family. PSII is composed of 1 copy each of membrane proteins PsbA, PsbB, PsbC, PsbD, PsbE, PsbF, PsbH, PsbI, PsbJ, PsbK, PsbL, PsbM, PsbT, PsbX, PsbY, PsbZ, Psb30/Ycf12, at least 3 peripheral proteins of the oxygen-evolving complex and a large number of cofactors. It forms dimeric complexes. The D1/D2 heterodimer binds P680, chlorophylls that are the primary electron donor of PSII, and subsequent electron acceptors. It shares a non-heme iron and each subunit binds pheophytin, quinone, additional chlorophylls, carotenoids and lipids. D1 provides most of the ligands for the Mn4-Ca-O5 cluster of the oxygen-evolving complex (OEC). There is also a Cl(-1) ion associated with D1 and D2, which is required for oxygen evolution. The PSII complex binds additional chlorophylls, carotenoids and specific lipids. is required as a cofactor. In terms of processing, tyr-161 forms a radical intermediate that is referred to as redox-active TyrZ, YZ or Y-Z. Post-translationally, C-terminally processed by CTPA; processing is essential to allow assembly of the oxygen-evolving complex and thus photosynthetic growth.

The protein localises to the plastid. Its subcellular location is the chloroplast thylakoid membrane. It carries out the reaction 2 a plastoquinone + 4 hnu + 2 H2O = 2 a plastoquinol + O2. In terms of biological role, photosystem II (PSII) is a light-driven water:plastoquinone oxidoreductase that uses light energy to abstract electrons from H(2)O, generating O(2) and a proton gradient subsequently used for ATP formation. It consists of a core antenna complex that captures photons, and an electron transfer chain that converts photonic excitation into a charge separation. The D1/D2 (PsbA/PsbD) reaction center heterodimer binds P680, the primary electron donor of PSII as well as several subsequent electron acceptors. The protein is Photosystem II protein D1 of Trieres chinensis (Marine centric diatom).